Here is a 534-residue protein sequence, read N- to C-terminus: Hypothemycin biosynthesis cluster protein hpm4 (534 aa).

Disordered stretches follow at residues 34 to 61 (IEPAHSLEDEYSGQSGQGADDDPDSDGP), 110 to 130 (LQSPTTTASSAGSPSCAPLRL), and 236 to 287 (DGTG…KKCI). Composition is skewed to low complexity over residues 112–127 (SPTTTASSAGSPSCAP) and 258–275 (TVSSRQTRSRQAARACQT).

It functions in the pathway secondary metabolite biosynthesis. In terms of biological role, part of the gene cluster that mediates the biosynthesis of hypothemycin, a resorcylic acid lactone (RAL) that irreversibly inhibits a subset of protein kinases with a conserved cysteine in the ATP binding site such as human ERK2. The first step is performed by both PKSs hmp3 and hmp8 and leads to the production of 7',8'-dehydrozearalenol (DHZ). The highly reducing PKS hpm8 synthesizes the reduced hexaketide (7S,11S,2E,8E)-7,11-dihydroxy-dodeca-2,8-dienoate, which is transferred downstream to the non-reducing PKS hpm3. Hpm3 then extends the reduced hexaketide to a nonaketide, after which regioselective cyclization and macrolactonization affords DHZ. The next step is the conversion of DHZ into aigialomycin C and is performed by the O-methyltransferase hmp5, the FAD-binding monooxygenase hmp7, and the cytochrome P450 monooxygenase hmp1. The wide substrate tolerance of the hmp5 and hmp7 implies that the reactions from DHZ to aigialomycin C can occur in any order. The steps from aigialomycin C to hypothemycin are less well established. The FAD-linked oxidoreductase hmp9 presumably catalyzes oxidation of the C-6' hydroxyl to a ketone. The timing of this oxidation is important, since the resulting enone functional group is a Michael acceptor that can react spontaneously with glutathione, an abundant metabolite in fungal cells. The glutathione S-transferase hmp2 catalyzes cis-trans isomerization of the 7',8' double bond with equilibrium favoring the trans isomer. The hpm6-encoded transporter might preferentially pump hypothemycin out of the cell relative to the trans isomer aigialomycin A. The cis-to-trans isomerization may be coupled with C-4' hydroxylation, since all known hypothemycin analogs containing the enone functional group also have hydroxyl groups at both C-4' and C-5'. The sequence is that of Hypothemycin biosynthesis cluster protein hpm4 from Hypomyces subiculosus (Nectria subiculosa).